The primary structure comprises 234 residues: MKKALVVFSGGQDSTTCAALACREYDEVHAVTFEYNQRHAIELESARAVGQALGLTGHEFIRLGPLLKGTSPLVSDAPLGQYASAAELPAGVEPTFVPGRNILFLTLAANRAFCLGTGDIVIGVCEADFAGYWDCRQVFVEAMARALGEGIYGDANAIRIHTPLMRLTKAETVKLSVEVLGERFEEVLALSHTCYAGVRGGCGRCHACILRDRGFREAGVPDPIWKFRKEPVSL.

Position 8 to 18 (8 to 18 (FSGGQDSTTCA)) interacts with ATP. Zn(2+) contacts are provided by Cys-194, Cys-202, Cys-205, and Cys-208.

The protein belongs to the QueC family. It depends on Zn(2+) as a cofactor.

It catalyses the reaction 7-carboxy-7-deazaguanine + NH4(+) + ATP = 7-cyano-7-deazaguanine + ADP + phosphate + H2O + H(+). It functions in the pathway purine metabolism; 7-cyano-7-deazaguanine biosynthesis. Functionally, catalyzes the ATP-dependent conversion of 7-carboxy-7-deazaguanine (CDG) to 7-cyano-7-deazaguanine (preQ(0)). This Gloeobacter violaceus (strain ATCC 29082 / PCC 7421) protein is 7-cyano-7-deazaguanine synthase.